Reading from the N-terminus, the 314-residue chain is ATP synthase gamma chain (314 aa).

The protein belongs to the ATPase gamma chain family. As to quaternary structure, F-type ATPases have 2 components, CF(1) - the catalytic core - and CF(0) - the membrane proton channel. CF(1) has five subunits: alpha(3), beta(3), gamma(1), delta(1), epsilon(1). CF(0) has three main subunits: a, b and c.

The protein localises to the cell membrane. Its function is as follows. Produces ATP from ADP in the presence of a proton gradient across the membrane. The gamma chain is believed to be important in regulating ATPase activity and the flow of protons through the CF(0) complex. This is ATP synthase gamma chain from Cutibacterium acnes (strain DSM 16379 / KPA171202) (Propionibacterium acnes).